Consider the following 324-residue polypeptide: Phospho-N-acetylmuramoyl-pentapeptide-transferase (324 aa).

The next 10 helical transmembrane spans lie at 5–25, 50–70, 77–97, 117–137, 147–167, 176–196, 203–223, 227–247, 250–270, and 302–322; these read VILFTIIMGFLISVLISPILI, GTPTMGGVMIIVSIAITAIVM, LSAEMFLLLFVTIGYGLLGFL, LIGQIIIAIVFYGVYHYCHFS, LSIDLGWGYFILVLFMLVGGS, LDGLLSGTAAIAFGAFAILAW, VAIFSVAVVGAVLGFLVFNAH, VFMGDTGSLALGGAIVTVAIL, LEILLVIIGGVFVIETLSVIL, and VVVTFWTAGLLLAVLGIYIEV.

The protein belongs to the glycosyltransferase 4 family. MraY subfamily. Mg(2+) is required as a cofactor.

Its subcellular location is the cell membrane. It carries out the reaction UDP-N-acetyl-alpha-D-muramoyl-L-alanyl-gamma-D-glutamyl-meso-2,6-diaminopimeloyl-D-alanyl-D-alanine + di-trans,octa-cis-undecaprenyl phosphate = di-trans,octa-cis-undecaprenyl diphospho-N-acetyl-alpha-D-muramoyl-L-alanyl-D-glutamyl-meso-2,6-diaminopimeloyl-D-alanyl-D-alanine + UMP. It functions in the pathway cell wall biogenesis; peptidoglycan biosynthesis. Catalyzes the initial step of the lipid cycle reactions in the biosynthesis of the cell wall peptidoglycan: transfers peptidoglycan precursor phospho-MurNAc-pentapeptide from UDP-MurNAc-pentapeptide onto the lipid carrier undecaprenyl phosphate, yielding undecaprenyl-pyrophosphoryl-MurNAc-pentapeptide, known as lipid I. In Bacillus velezensis (strain DSM 23117 / BGSC 10A6 / LMG 26770 / FZB42) (Bacillus amyloliquefaciens subsp. plantarum), this protein is Phospho-N-acetylmuramoyl-pentapeptide-transferase.